A 353-amino-acid chain; its full sequence is Photosystem II protein D1 (353 aa).

Residue Thr-2 is modified to N-acetylthreonine. Phosphothreonine is present on Thr-2. The next 3 helical transmembrane spans lie at Tyr-29–Ser-46, His-118–Leu-133, and Trp-142–Ala-156. Residue His-118 coordinates chlorophyll a. Tyr-126 provides a ligand contact to pheophytin a. Residues Asp-170 and Glu-189 each coordinate [CaMn4O5] cluster. Residues Phe-197–Leu-218 traverse the membrane as a helical segment. A chlorophyll a-binding site is contributed by His-198. Residues His-215 and Ser-264–Phe-265 each bind a quinone. His-215 contacts Fe cation. Fe cation is bound at residue His-272. Residues Phe-274–Leu-288 traverse the membrane as a helical segment. Residues His-332, Glu-333, Asp-342, and Ala-344 each coordinate [CaMn4O5] cluster. A propeptide spanning residues Ala-345–Ala-353 is cleaved from the precursor.

This sequence belongs to the reaction center PufL/M/PsbA/D family. PSII is composed of 1 copy each of membrane proteins PsbA, PsbB, PsbC, PsbD, PsbE, PsbF, PsbH, PsbI, PsbJ, PsbK, PsbL, PsbM, PsbT, PsbX, PsbY, PsbZ, Psb30/Ycf12, at least 3 peripheral proteins of the oxygen-evolving complex and a large number of cofactors. It forms dimeric complexes. Requires The D1/D2 heterodimer binds P680, chlorophylls that are the primary electron donor of PSII, and subsequent electron acceptors. It shares a non-heme iron and each subunit binds pheophytin, quinone, additional chlorophylls, carotenoids and lipids. D1 provides most of the ligands for the Mn4-Ca-O5 cluster of the oxygen-evolving complex (OEC). There is also a Cl(-1) ion associated with D1 and D2, which is required for oxygen evolution. The PSII complex binds additional chlorophylls, carotenoids and specific lipids. as cofactor. Tyr-161 forms a radical intermediate that is referred to as redox-active TyrZ, YZ or Y-Z. Post-translationally, C-terminally processed by CTPA; processing is essential to allow assembly of the oxygen-evolving complex and thus photosynthetic growth.

Its subcellular location is the plastid. The protein resides in the chloroplast thylakoid membrane. The catalysed reaction is 2 a plastoquinone + 4 hnu + 2 H2O = 2 a plastoquinol + O2. Its function is as follows. Photosystem II (PSII) is a light-driven water:plastoquinone oxidoreductase that uses light energy to abstract electrons from H(2)O, generating O(2) and a proton gradient subsequently used for ATP formation. It consists of a core antenna complex that captures photons, and an electron transfer chain that converts photonic excitation into a charge separation. The D1/D2 (PsbA/PsbD) reaction center heterodimer binds P680, the primary electron donor of PSII as well as several subsequent electron acceptors. The chain is Photosystem II protein D1 from Chlamydomonas moewusii (Chlamydomonas eugametos).